Here is a 282-residue protein sequence, read N- to C-terminus: Farnesyl diphosphate synthase (282 aa).

Residues Lys-45, Arg-48, and His-77 each coordinate isopentenyl diphosphate. Residues Asp-84 and Asp-90 each contribute to the Mg(2+) site. Position 95 (Arg-95) interacts with (2E)-geranyl diphosphate. Position 96 (Arg-96) interacts with isopentenyl diphosphate. 3 residues coordinate (2E)-geranyl diphosphate: Lys-181, Thr-182, and Gln-220.

Belongs to the FPP/GGPP synthase family. Mg(2+) is required as a cofactor.

Its subcellular location is the cytoplasm. The catalysed reaction is isopentenyl diphosphate + (2E)-geranyl diphosphate = (2E,6E)-farnesyl diphosphate + diphosphate. The chain is Farnesyl diphosphate synthase (ispA) from Buchnera aphidicola subsp. Acyrthosiphon pisum (strain APS) (Acyrthosiphon pisum symbiotic bacterium).